A 275-amino-acid chain; its full sequence is Elongation factor Ts (275 aa).

An involved in Mg(2+) ion dislocation from EF-Tu region spans residues 76–79; the sequence is TDFV.

The protein belongs to the EF-Ts family.

Its subcellular location is the cytoplasm. In terms of biological role, associates with the EF-Tu.GDP complex and induces the exchange of GDP to GTP. It remains bound to the aminoacyl-tRNA.EF-Tu.GTP complex up to the GTP hydrolysis stage on the ribosome. The sequence is that of Elongation factor Ts from Salinispora tropica (strain ATCC BAA-916 / DSM 44818 / JCM 13857 / NBRC 105044 / CNB-440).